The sequence spans 602 residues: FAD-binding monooxygenase hmp7 (602 aa).

FAD is bound by residues 108-111 (TWYW), 120-121 (DV), and tyrosine 126. 118–120 (QCD) contributes to the NADP(+) binding site. NADP(+)-binding positions include 252 to 258 (TGATAVQ) and 275 to 276 (RT).

This sequence belongs to the FAD-binding monooxygenase family. The cofactor is FAD.

It functions in the pathway secondary metabolite biosynthesis. In terms of biological role, FAD-binding monooxygenase; part of the gene cluster that mediates the biosynthesis of hypothemycin, a resorcylic acid lactone (RAL) that irreversibly inhibits a subset of protein kinases with a conserved cysteine in the ATP binding site such as human ERK2. The first step is performed by both PKSs hmp3 and hmp8 and leads to the production of 7',8'-dehydrozearalenol (DHZ). The highly reducing PKS hpm8 synthesizes the reduced hexaketide (7S,11S,2E,8E)-7,11-dihydroxy-dodeca-2,8-dienoate, which is transferred downstream to the non-reducing PKS hpm3. Hpm3 then extends the reduced hexaketide to a nonaketide, after which regioselective cyclization and macrolactonization affords DHZ. The next step is the conversion of DHZ into aigialomycin C and is performed by the O-methyltransferase hmp5, the FAD-binding monooxygenase hmp7, and the cytochrome P450 monooxygenase hmp1. The wide substrate tolerance of the hmp5 and hmp7 implies that the reactions from DHZ to aigialomycin C can occur in any order. The steps from aigialomycin C to hypothemycin are less well established. The FAD-linked oxidoreductase hmp9 presumably catalyzes oxidation of the C-6' hydroxyl to a ketone. The timing of this oxidation is important, since the resulting enone functional group is a Michael acceptor that can react spontaneously with glutathione, an abundant metabolite in fungal cells. The glutathione S-transferase hmp2 catalyzes cis-trans isomerization of the 7',8' double bond with equilibrium favoring the trans isomer. The hpm6-encoded transporter might preferentially pump hypothemycin out of the cell relative to the trans isomer aigialomycin A. The cis-to-trans isomerization may be coupled with C-4' hydroxylation, since all known hypothemycin analogs containing the enone functional group also have hydroxyl groups at both C-4' and C-5'. This Hypomyces subiculosus (Nectria subiculosa) protein is FAD-binding monooxygenase hmp7.